A 63-amino-acid chain; its full sequence is Small ribosomal subunit protein eS17 (63 aa).

It belongs to the eukaryotic ribosomal protein eS17 family.

This chain is Small ribosomal subunit protein eS17, found in Methanococcus maripaludis (strain DSM 14266 / JCM 13030 / NBRC 101832 / S2 / LL).